A 1046-amino-acid chain; its full sequence is Suppressor of Mek1 (1046 aa).

In terms of domain architecture, WH1 spans 1–101 (MEPLRKRVKV…QDIWENILQY (101 aa)). Residues 626 to 1046 (FESPETSCNN…SSPTPSELHV (421 aa)) form a disordered region. Residues 665 to 689 (IDEEEEEAYFNRDDDSEDSDDEDEL) show a composition bias toward acidic residues. Low complexity predominate over residues 695–713 (NNNNNNNNNNKQICTNNEN). The span at 714–727 (NMEKNDDNIEKDNE) shows a compositional bias: basic and acidic residues. A compositionally biased stretch (acidic residues) spans 743-752 (YEDEDDEDDE). Positions 753–783 (INKSVESDDIVEKHEIIDKNEKKDEIMKENN) are enriched in basic and acidic residues. Acidic residues predominate over residues 784 to 803 (DSDNDDNDNNDNDNDNDNNS). Positions 804–820 (DIENKNHLNNNGNNENN) are enriched in low complexity. 2 stretches are compositionally biased toward basic and acidic residues: residues 826 to 855 (VQDK…KENL) and 862 to 876 (EKVK…KKEN). Positions 889–905 (SNNSNNNNNNNNNNSNN) are enriched in low complexity. Residues 909–935 (GDNRKTTPKRKLDYEKNESVVSKKIDK) are compositionally biased toward basic and acidic residues. Positions 958–995 (NNNNSNNNNNNNNNNNNNNNNNNNNNNNNNNNNNNNQN) are enriched in low complexity. Positions 996–1011 (DENELSSASEEEEEQL) are enriched in acidic residues. The Nuclear localization signal signature appears at 1003–1022 (ASEEEEEQLENGKHIKKFKR). Low complexity predominate over residues 1028–1038 (NNSSNNSNNSS).

It belongs to the SMEK family. In terms of assembly, interacts with ppp4c.

It localises to the cytoplasm. The protein localises to the cell cortex. It is found in the nucleus. Suppresses MEK1 null cell polarity, chemotaxis, and gene expression defects. Required for proper cytokinesis during vegetative growth, timely exit from the mound stage during development, and myosin II assembly. May be a regulatory subunit of serine/threonine-protein phosphatase 4 (PP4) and may control localization of PP4 to the nucleus. Involved in the regulation of some ppp4c functions, such as developmental progression, chemotaxis, expression of stress response genes and cell movement. This is Suppressor of Mek1 (smkA) from Dictyostelium discoideum (Social amoeba).